A 21-amino-acid chain; its full sequence is FANTIRLLINKVREWKNKQSS.

Serine 21 bears the Serine amide mark.

In terms of tissue distribution, expressed by the venom gland.

Its subcellular location is the secreted. In Cupiennius salei (American wandering spider), this protein is Cupiennin-6b.